The following is a 240-amino-acid chain: Probable septum site-determining protein MinC (240 aa).

It belongs to the MinC family. Interacts with MinD and FtsZ.

Cell division inhibitor that blocks the formation of polar Z ring septums. Rapidly oscillates between the poles of the cell to destabilize FtsZ filaments that have formed before they mature into polar Z rings. Prevents FtsZ polymerization. The chain is Probable septum site-determining protein MinC from Chromobacterium violaceum (strain ATCC 12472 / DSM 30191 / JCM 1249 / CCUG 213 / NBRC 12614 / NCIMB 9131 / NCTC 9757 / MK).